The chain runs to 238 residues: Uridylate kinase (238 aa).

Residue 12-15 (KLSG) participates in ATP binding. Glycine 54 is a binding site for UMP. ATP contacts are provided by glycine 55 and arginine 59. UMP contacts are provided by residues aspartate 74 and 135 to 142 (TGNPFFTT). ATP is bound by residues threonine 162, asparagine 163, tyrosine 168, and aspartate 171.

The protein belongs to the UMP kinase family. As to quaternary structure, homohexamer.

The protein localises to the cytoplasm. It catalyses the reaction UMP + ATP = UDP + ADP. It functions in the pathway pyrimidine metabolism; CTP biosynthesis via de novo pathway; UDP from UMP (UMPK route): step 1/1. With respect to regulation, inhibited by UTP. Its function is as follows. Catalyzes the reversible phosphorylation of UMP to UDP. This Rhodopseudomonas palustris (strain HaA2) protein is Uridylate kinase.